The primary structure comprises 71 residues: uncharacterized protein (71 aa).

This is an uncharacterized protein from Spiroplasma virus 4 (SpV4).